The chain runs to 175 residues: NADH dehydrogenase [ubiquinone] iron-sulfur protein 4, mitochondrial (175 aa).

The N-terminal 42 residues, 1–42, are a transit peptide targeting the mitochondrion; that stretch reads MAAVSMSVALRQALWGRRVATVAAVSVSKVSTRSLSTSTWRL. Residues 149 to 175 form a disordered region; that stretch reads ERKVPKPKSKSYGANFSWNKRTRVSTK. Position 173 is a phosphoserine (Ser-173).

Belongs to the complex I NDUFS4 subunit family. As to quaternary structure, mammalian complex I is composed of 45 different subunits. This is a component of the iron-sulfur (IP) fragment of the enzyme. Interacts with BCAP31 and TOMM40; the interaction mediates its translocation to the mitochondria; the interaction with BCAP31 is direct. Phosphorylated.

It is found in the mitochondrion inner membrane. Accessory subunit of the mitochondrial membrane respiratory chain NADH dehydrogenase (Complex I), that is believed not to be involved in catalysis. Complex I functions in the transfer of electrons from NADH to the respiratory chain. The immediate electron acceptor for the enzyme is believed to be ubiquinone. The sequence is that of NADH dehydrogenase [ubiquinone] iron-sulfur protein 4, mitochondrial (NDUFS4) from Bos taurus (Bovine).